Reading from the N-terminus, the 335-residue chain is Trans-3-hydroxy-L-proline dehydratase (335 aa).

The active-site Proton acceptor is C91. Substrate contacts are provided by residues 92 to 93 (GH), D251, and 256 to 257 (GS).

Belongs to the proline racemase family.

The catalysed reaction is trans-3-hydroxy-L-proline = 1-pyrroline-2-carboxylate + H2O. In terms of biological role, catalyzes the dehydration of trans-3-hydroxy-L-proline (t3LHyp) to Delta(1)-pyrroline-2-carboxylate (Pyr2C). Is likely involved in a degradation pathway that converts t3LHyp to L-proline. Displays neither trans-4-hydroxy-L-proline (t4LHyp) epimerase nor proline racemase activity. In Burkholderia ambifaria (strain ATCC BAA-244 / DSM 16087 / CCUG 44356 / LMG 19182 / AMMD) (Burkholderia cepacia (strain AMMD)), this protein is Trans-3-hydroxy-L-proline dehydratase.